The sequence spans 113 residues: Iron-sulfur cluster insertion protein ErpA (113 aa).

Positions 41, 105, and 107 each coordinate iron-sulfur cluster.

Belongs to the HesB/IscA family. Homodimer. Iron-sulfur cluster serves as cofactor.

Functionally, required for insertion of 4Fe-4S clusters for at least IspG. The sequence is that of Iron-sulfur cluster insertion protein ErpA from Actinobacillus pleuropneumoniae serotype 7 (strain AP76).